Consider the following 140-residue polypeptide: Odorant-binding protein 10 (140 aa).

A signal peptide spans 1–25 (MTSFRLANLTVFLVLLFCFMRGVHS).

The protein belongs to the PBP/GOBP family. High-level expression in female mouth parts, particularly in the proboscis (at protein level). Low-level expression in female antenna (at protein level). Female salivary gland. Female chemosensory organs: antenna, palp and proboscis. Male antenna, wing and maxillary palp. Expressed at higher levels in male tissues compared to female tissues. Not detected in midgut.

It is found in the secreted. In terms of biological role, involved in modulation of blood-feeding behavior and capacity in female mosquitoes. Required for normal oviposition. Required for normal fecundity and fertility of female mosquitoes. Required for normal expression of VGA1 gene, which encodes the egg yolk protein vitellogenin-A1. Required for normal female longevity when mosquitoes are maintained on regular sugar meal. (Microbial infection) Facilitates shedding of dengue virus type 2 particles into mosquito saliva. Does not affect dengue virus type 2 replication or infection prevalence in midgut and salivary glands at 14 days after blood feeding. Its function is as follows. (Microbial infection) Facilitates shedding of Zika virus particles into mosquito saliva. Does not affect Zika virus replication or infection prevalence in midgut and salivary glands at 14 days after blood feeding. The sequence is that of Odorant-binding protein 10 from Aedes aegypti (Yellowfever mosquito).